A 225-amino-acid polypeptide reads, in one-letter code: Probable proteasome subunit beta type-6 (225 aa).

It belongs to the peptidase T1B family. In terms of assembly, the 26S proteasome consists of a 20S proteasome core and two 19S regulatory subunits. The 20S proteasome core is composed of 28 subunits that are arranged in four stacked rings, resulting in a barrel-shaped structure. The two end rings are each formed by seven alpha subunits, and the two central rings are each formed by seven beta subunits. The catalytic chamber with the active sites is on the inside of the barrel.

It localises to the cytoplasm. Its subcellular location is the nucleus. In terms of biological role, non-catalytic component of the proteasome, a multicatalytic proteinase complex which is characterized by its ability to cleave peptides with Arg, Phe, Tyr, Leu, and Glu adjacent to the leaving group at neutral or slightly basic pH. The proteasome has an ATP-dependent proteolytic activity. The protein is Probable proteasome subunit beta type-6 (pam1) of Schizosaccharomyces pombe (strain 972 / ATCC 24843) (Fission yeast).